Here is a 298-residue protein sequence, read N- to C-terminus: Probable endonuclease 4 (298 aa).

9 residues coordinate Zn(2+): H70, H111, E146, D180, H183, H215, D228, H230, and E260.

It belongs to the AP endonuclease 2 family. Zn(2+) serves as cofactor.

The catalysed reaction is Endonucleolytic cleavage to 5'-phosphooligonucleotide end-products.. Functionally, endonuclease IV plays a role in DNA repair. It cleaves phosphodiester bonds at apurinic or apyrimidinic (AP) sites, generating a 3'-hydroxyl group and a 5'-terminal sugar phosphate. The protein is Probable endonuclease 4 of Halalkalibacterium halodurans (strain ATCC BAA-125 / DSM 18197 / FERM 7344 / JCM 9153 / C-125) (Bacillus halodurans).